The chain runs to 323 residues: tRNA U34 carboxymethyltransferase (323 aa).

Carboxy-S-adenosyl-L-methionine contacts are provided by residues lysine 91, tryptophan 105, lysine 110, glycine 130, 152–154 (DPT), 181–182 (IE), methionine 196, tyrosine 200, and arginine 315.

The protein belongs to the class I-like SAM-binding methyltransferase superfamily. CmoB family. In terms of assembly, homotetramer.

It catalyses the reaction carboxy-S-adenosyl-L-methionine + 5-hydroxyuridine(34) in tRNA = 5-carboxymethoxyuridine(34) in tRNA + S-adenosyl-L-homocysteine + H(+). Functionally, catalyzes carboxymethyl transfer from carboxy-S-adenosyl-L-methionine (Cx-SAM) to 5-hydroxyuridine (ho5U) to form 5-carboxymethoxyuridine (cmo5U) at position 34 in tRNAs. The protein is tRNA U34 carboxymethyltransferase of Escherichia coli O139:H28 (strain E24377A / ETEC).